The sequence spans 153 residues: Gastric inhibitory polypeptide (153 aa).

An N-terminal signal peptide occupies residues 1–21 (MVATKTFALLLLSLFLAVGLG). Propeptides lie at residues 22–50 (EKKE…PRGP) and 95–153 (EARA…LRSR). The segment at 102–125 (ASQANRKEEEAVEPQSSPAKNPSD) is disordered.

This sequence belongs to the glucagon family.

It is found in the secreted. Its function is as follows. Potent stimulator of insulin secretion and relatively poor inhibitor of gastric acid secretion. The chain is Gastric inhibitory polypeptide (GIP) from Homo sapiens (Human).